Reading from the N-terminus, the 147-residue chain is Hemoglobin subunit beta (147 aa).

Valine 2 carries the N-acetylvaline modification. Residues 3–147 form the Globin domain; that stretch reads HLTAEEKAAV…VATALAHKYH (145 aa). The residue at position 13 (threonine 13) is a Phosphothreonine. A Phosphoserine modification is found at serine 45. The residue at position 60 (lysine 60) is an N6-acetyllysine. Histidine 64 is a heme b binding site. Lysine 83 carries the post-translational modification N6-acetyllysine. Histidine 93 is a binding site for heme b. S-nitrosocysteine is present on cysteine 94. Lysine 145 carries the N6-acetyllysine modification.

This sequence belongs to the globin family. Heterotetramer of two alpha chains and two beta chains. Red blood cells.

Functionally, involved in oxygen transport from the lung to the various peripheral tissues. This Carlito syrichta (Philippine tarsier) protein is Hemoglobin subunit beta (HBB).